The chain runs to 297 residues: UDP-N-acetylenolpyruvoylglucosamine reductase (297 aa).

The 167-residue stretch at 18-184 (QVGGPAEWYL…LSARLRLAPG (167 aa)) folds into the FAD-binding PCMH-type domain. The active site involves Arg163. Ser214 (proton donor) is an active-site residue. The active site involves Glu285.

The cofactor is FAD.

Its subcellular location is the cytoplasm. The catalysed reaction is UDP-N-acetyl-alpha-D-muramate + NADP(+) = UDP-N-acetyl-3-O-(1-carboxyvinyl)-alpha-D-glucosamine + NADPH + H(+). Its pathway is cell wall biogenesis; peptidoglycan biosynthesis. In terms of biological role, cell wall formation. This chain is UDP-N-acetylenolpyruvoylglucosamine reductase, found in Gloeobacter violaceus (strain ATCC 29082 / PCC 7421).